Consider the following 20-residue polypeptide: Sperm acrosome membrane-associated protein 3, processed form (20 aa).

Belongs to the glycosyl hydrolase 22 family.

In terms of biological role, sperm surface membrane protein that may be involved in sperm-egg plasma membrane adhesion and fusion during fertilization. It could be a potential receptor for the egg oligosaccharide residue N-acetylglucosamine, which is present in the extracellular matrix over the egg plasma membrane. The polypeptide is Sperm acrosome membrane-associated protein 3, processed form (SPACA3) (Vulpes vulpes (Red fox)).